Consider the following 66-residue polypeptide: Large ribosomal subunit protein bL33 (66 aa).

This sequence belongs to the bacterial ribosomal protein bL33 family.

The polypeptide is Large ribosomal subunit protein bL33 (Synechococcus sp. (strain CC9902)).